Reading from the N-terminus, the 386-residue chain is Histidine decarboxylase (386 aa).

Substrate is bound at residue histidine 120. Lysine 233 is subject to N6-(pyridoxal phosphate)lysine.

The protein belongs to the group II decarboxylase family. Homotetramer. It depends on pyridoxal 5'-phosphate as a cofactor.

The catalysed reaction is L-histidine + H(+) = histamine + CO2. The sequence is that of Histidine decarboxylase from Vibrio campbellii (strain ATCC BAA-1116).